A 567-amino-acid polypeptide reads, in one-letter code: Dihydroxy-acid dehydratase (567 aa).

Position 57 (Cys-57) interacts with [2Fe-2S] cluster. Asp-89 contacts Mg(2+). Position 130 (Cys-130) interacts with [2Fe-2S] cluster. Mg(2+) contacts are provided by Asp-131 and Lys-132. At Lys-132 the chain carries N6-carboxylysine. Cys-202 lines the [2Fe-2S] cluster pocket. A Mg(2+)-binding site is contributed by Glu-453. Catalysis depends on Ser-479, which acts as the Proton acceptor.

It belongs to the IlvD/Edd family. Homodimer. Requires [2Fe-2S] cluster as cofactor. Mg(2+) is required as a cofactor.

It catalyses the reaction (2R)-2,3-dihydroxy-3-methylbutanoate = 3-methyl-2-oxobutanoate + H2O. The catalysed reaction is (2R,3R)-2,3-dihydroxy-3-methylpentanoate = (S)-3-methyl-2-oxopentanoate + H2O. Its pathway is amino-acid biosynthesis; L-isoleucine biosynthesis; L-isoleucine from 2-oxobutanoate: step 3/4. It participates in amino-acid biosynthesis; L-valine biosynthesis; L-valine from pyruvate: step 3/4. Functions in the biosynthesis of branched-chain amino acids. Catalyzes the dehydration of (2R,3R)-2,3-dihydroxy-3-methylpentanoate (2,3-dihydroxy-3-methylvalerate) into 2-oxo-3-methylpentanoate (2-oxo-3-methylvalerate) and of (2R)-2,3-dihydroxy-3-methylbutanoate (2,3-dihydroxyisovalerate) into 2-oxo-3-methylbutanoate (2-oxoisovalerate), the penultimate precursor to L-isoleucine and L-valine, respectively. The protein is Dihydroxy-acid dehydratase of Nocardioides sp. (strain ATCC BAA-499 / JS614).